The primary structure comprises 415 residues: Serine hydroxymethyltransferase (415 aa).

Residues 1-10 (MERSHIRDVD) are compositionally biased toward basic and acidic residues. Residues 1–21 (MERSHIRDVDPDAADALSSER) are disordered. Residues leucine 119 and 123–125 (GHL) contribute to the (6S)-5,6,7,8-tetrahydrofolate site. Position 228 is an N6-(pyridoxal phosphate)lysine (lysine 228). 353-355 (SAF) is a binding site for (6S)-5,6,7,8-tetrahydrofolate.

The protein belongs to the SHMT family. As to quaternary structure, homodimer. The cofactor is pyridoxal 5'-phosphate.

It is found in the cytoplasm. The catalysed reaction is (6R)-5,10-methylene-5,6,7,8-tetrahydrofolate + glycine + H2O = (6S)-5,6,7,8-tetrahydrofolate + L-serine. The protein operates within one-carbon metabolism; tetrahydrofolate interconversion. It functions in the pathway amino-acid biosynthesis; glycine biosynthesis; glycine from L-serine: step 1/1. Functionally, catalyzes the reversible interconversion of serine and glycine with tetrahydrofolate (THF) serving as the one-carbon carrier. Also exhibits THF-independent aldolase activity toward beta-hydroxyamino acids, producing glycine and aldehydes, via a retro-aldol mechanism. This Haloquadratum walsbyi (strain DSM 16790 / HBSQ001) protein is Serine hydroxymethyltransferase.